A 215-amino-acid chain; its full sequence is 25 kDa ookinete surface antigen (215 aa).

An N-terminal signal peptide occupies residues 1–16 (MNMSYLFFFFFIQLVL). An EGF-like 1; truncated domain is found at 29–58 (CKDGFLIQMSNHFECNCNPGFVLTSESTCE). EGF-like domains are found at residues 59 to 104 (NKVE…SICV), 104 to 148 (VPNE…NTCT), and 151 to 191 (GQTE…NACI). Cystine bridges form between cysteine 63/cysteine 78, cysteine 72/cysteine 90, cysteine 92/cysteine 103, cysteine 108/cysteine 118, cysteine 113/cysteine 131, cysteine 133/cysteine 147, cysteine 155/cysteine 166, cysteine 159/cysteine 175, and cysteine 177/cysteine 190. Residues asparagine 144 and asparagine 163 are each glycosylated (N-linked (GlcNAc...) asparagine). Serine 192 carries the GPI-anchor amidated serine lipid modification. A propeptide spans 193–215 (FSLFNILNLSIIFIISLIYFYII) (removed in mature form). An N-linked (GlcNAc...) asparagine glycan is attached at asparagine 200.

The protein localises to the cell membrane. In Plasmodium gallinaceum, this protein is 25 kDa ookinete surface antigen.